A 198-amino-acid polypeptide reads, in one-letter code: Probable host range protein 2-3 (198 aa).

A disordered region spans residues 153 to 198 (GENGYEDSTEEEDNEEDTDGVCLYCLEEEEEEDEDEDEDEDEDEEE). 2 stretches are compositionally biased toward acidic residues: residues 156 to 171 (GYED…EDTD) and 178 to 198 (LEEE…DEEE).

This sequence belongs to the poxviridae C7 protein family.

Plays a role for multiplication of the virus in different cell types. In Rabbit fibroma virus (strain Kasza) (RFV), this protein is Probable host range protein 2-3.